The primary structure comprises 371 residues: Succinyl-diaminopimelate desuccinylase (371 aa).

Histidine 68 is a binding site for Zn(2+). Residue aspartate 70 is part of the active site. Aspartate 99 serves as a coordination point for Zn(2+). Glutamate 130 serves as the catalytic Proton acceptor. Zn(2+)-binding residues include glutamate 131, glutamate 159, and histidine 344.

It belongs to the peptidase M20A family. DapE subfamily. Homodimer. The cofactor is Zn(2+). Requires Co(2+) as cofactor.

It carries out the reaction N-succinyl-(2S,6S)-2,6-diaminopimelate + H2O = (2S,6S)-2,6-diaminopimelate + succinate. Its pathway is amino-acid biosynthesis; L-lysine biosynthesis via DAP pathway; LL-2,6-diaminopimelate from (S)-tetrahydrodipicolinate (succinylase route): step 3/3. In terms of biological role, catalyzes the hydrolysis of N-succinyl-L,L-diaminopimelic acid (SDAP), forming succinate and LL-2,6-diaminopimelate (DAP), an intermediate involved in the bacterial biosynthesis of lysine and meso-diaminopimelic acid, an essential component of bacterial cell walls. This Acidiphilium cryptum (strain JF-5) protein is Succinyl-diaminopimelate desuccinylase.